Reading from the N-terminus, the 56-residue chain is Ovomucoid (56 aa).

In terms of domain architecture, Kazal-like spans 6–56; it reads VDCSEYPKPACTMEQRPLCGSDNKTYGNKCNFCNAVVESNGTLTLSHFGKC. Disulfide bonds link Cys8/Cys38, Cys16/Cys35, and Cys24/Cys56. An N-linked (GlcNAc...) asparagine glycan is attached at Asn45.

The protein resides in the secreted. The protein is Ovomucoid of Afropavo congensis (Congo peafowl).